The chain runs to 400 residues: Acetate kinase (400 aa).

Asparagine 8 provides a ligand contact to Mg(2+). Lysine 15 contacts ATP. A substrate-binding site is contributed by arginine 89. Aspartate 146 acts as the Proton donor/acceptor in catalysis. ATP-binding positions include 206 to 210 (HVGNG), 283 to 285 (DMR), and 331 to 335 (GMGEN). Position 383 (glutamate 383) interacts with Mg(2+).

Belongs to the acetokinase family. Homodimer. Mg(2+) serves as cofactor. Requires Mn(2+) as cofactor.

The protein resides in the cytoplasm. The enzyme catalyses acetate + ATP = acetyl phosphate + ADP. The protein operates within metabolic intermediate biosynthesis; acetyl-CoA biosynthesis; acetyl-CoA from acetate: step 1/2. Its function is as follows. Catalyzes the formation of acetyl phosphate from acetate and ATP. Can also catalyze the reverse reaction. This is Acetate kinase from Streptococcus equi subsp. zooepidemicus (strain MGCS10565).